Consider the following 37-residue polypeptide: Cytochrome b6-f complex subunit 5 (37 aa).

Residues 5–25 (LLSGIVLGMITVSALGLFVAA) form a helical membrane-spanning segment.

It belongs to the PetG family. The 4 large subunits of the cytochrome b6-f complex are cytochrome b6, subunit IV (17 kDa polypeptide, PetD), cytochrome f and the Rieske protein, while the 4 small subunits are PetG, PetL, PetM and PetN. The complex functions as a dimer.

Its subcellular location is the plastid. The protein localises to the chloroplast thylakoid membrane. Its function is as follows. Component of the cytochrome b6-f complex, which mediates electron transfer between photosystem II (PSII) and photosystem I (PSI), cyclic electron flow around PSI, and state transitions. PetG is required for either the stability or assembly of the cytochrome b6-f complex. This Trieres chinensis (Marine centric diatom) protein is Cytochrome b6-f complex subunit 5.